The sequence spans 344 residues: Hyoscyamine 6-dioxygenase (344 aa).

Residues 193–293 (QIQMMLTNYY…RVSIATLIGP (101 aa)) form the Fe2OG dioxygenase domain. Fe cation is bound by residues H217, D219, and H274. R284 serves as a coordination point for 2-oxoglutarate.

This sequence belongs to the iron/ascorbate-dependent oxidoreductase family. Monomer. It depends on Fe(2+) as a cofactor. Requires L-ascorbate as cofactor. In terms of processing, the N-terminus is blocked. Root.

It catalyses the reaction L-hyoscyamine + 2-oxoglutarate + O2 = (6S)-6-hydroxyhyoscyamine + succinate + CO2. It participates in alkaloid biosynthesis; scopolamine biosynthesis. The sequence is that of Hyoscyamine 6-dioxygenase (H6H) from Hyoscyamus niger (Black henbane).